The primary structure comprises 643 residues: Beta-1,3-galactosyltransferase GALT1 (643 aa).

Topologically, residues 1-6 (MKRFYG) are cytoplasmic. The helical; Signal-anchor for type II membrane protein transmembrane segment at 7–23 (GLLVVSMCMFLTVYRYV) threads the bilayer. Over 24–643 (DLNTPVEKPY…TKRSLCCREW (620 aa)) the chain is Lumenal. 7 N-linked (GlcNAc...) asparagine glycosylation sites follow: asparagine 45, asparagine 87, asparagine 144, asparagine 162, asparagine 277, asparagine 287, and asparagine 508. The Galectin domain occupies 171 to 364 (LKLQIPCGLT…DFRLISILAS (194 aa)).

The protein belongs to the glycosyltransferase 31 family. Interacts with GMII. It depends on Mn(2+) as a cofactor. Expressed in stems and siliques.

It localises to the golgi apparatus membrane. It participates in protein modification; protein glycosylation. Its function is as follows. Beta-1,3-galactosyltransferase that transfers galactose from UDP-galactose to substrates with a terminal beta-N-acetylglucosamine (beta-GlcNAc) residue. Involved in the biosynthesis of N-glycans containing Lewis a structures (with the combination of FUT13). The polypeptide is Beta-1,3-galactosyltransferase GALT1 (Arabidopsis thaliana (Mouse-ear cress)).